A 428-amino-acid chain; its full sequence is Adenylosuccinate synthetase (428 aa).

GTP-binding positions include Gly12–Lys18 and Gly40–Thr42. Catalysis depends on Asp13, which acts as the Proton acceptor. The Mg(2+) site is built by Asp13 and Gly40. IMP-binding positions include Asp13 to Lys16, Asn38 to His41, Thr128, Arg142, Gln222, Thr237, and Arg301. The active-site Proton donor is His41. Thr297–Arg303 lines the substrate pocket. GTP contacts are provided by residues Arg303, Lys329–Asp331, and Ser411–Ser413.

Belongs to the adenylosuccinate synthetase family. In terms of assembly, homodimer. The cofactor is Mg(2+).

Its subcellular location is the cytoplasm. It catalyses the reaction IMP + L-aspartate + GTP = N(6)-(1,2-dicarboxyethyl)-AMP + GDP + phosphate + 2 H(+). It participates in purine metabolism; AMP biosynthesis via de novo pathway; AMP from IMP: step 1/2. Plays an important role in the de novo pathway of purine nucleotide biosynthesis. Catalyzes the first committed step in the biosynthesis of AMP from IMP. The sequence is that of Adenylosuccinate synthetase from Phenylobacterium zucineum (strain HLK1).